The chain runs to 379 residues: Synaptic vesicle membrane protein VAT-1 (379 aa).

Ser-273 is subject to Phosphoserine.

Belongs to the zinc-containing alcohol dehydrogenase family. Quinone oxidoreductase subfamily. As to expression, cholinergic synaptic vesicles.

The protein resides in the cytoplasmic vesicle. Its subcellular location is the secretory vesicle. It is found in the synaptic vesicle membrane. Its function is as follows. May play a central role in the functions mediated by specific classes of synaptic vesicles. The protein is Synaptic vesicle membrane protein VAT-1 of Tetronarce californica (Pacific electric ray).